Here is a 71-residue protein sequence, read N- to C-terminus: Palustrin-Ca (71 aa).

The signal sequence occupies residues 1-22 (MFTLKKSLLLLFFLGTISLSLC). The propeptide occupies 23–40 (EQERDADGDEGEVEEVKR). Cysteine 63 and cysteine 69 are oxidised to a cystine.

The protein belongs to the frog skin active peptide (FSAP) family. Brevinin subfamily. Expressed by the skin glands.

The protein resides in the secreted. The protein localises to the target cell membrane. Antibacterial peptide with amphipathic alpha-helical structure that exhibits potent broad-spectrum activity against Gram-positive and -negative bacteria. It is active against Listeria ATCC 54004 (MIC=30 ug/ml), S.aureus ATCC 25923 (MIC=7.8 ug/ml), S.suis 2 CVCC 606 (MIC=31.25 ug/ml), B.subtilis ADB403 (30 ug/ml), K.pneumoniae ATCC 700603 (MIC=60 ug/ml) and P.aeruginosa ATCC 227853 (MIC=30 ug/ml). Does not show activity against Salmonella ATCC 20020 and the fungus Candida albicans. Is also cytotoxic to HeLa cells at high concentrations. In addition, shows a strong antitumor activity but only a little hemolytic activity. Despite the presence of a Gly residue at position 10, this alpha-helical peptide remains relatively rigid, not exhibiting any significant flexibility during the molecular dynamics simulation. The peptide shows a preference for a position parallel to the target membrane that suggests it exerts its antimicrobial activity through a non-pore-forming mechanism of action, such as the carpet model or the interfacial activity model. This is Palustrin-Ca from Aquarana catesbeiana (American bullfrog).